Reading from the N-terminus, the 491-residue chain is MGCRALLLLSFLLLGAATTIPPRLKTLGSPHLSASPTPDPAVARKYSVLYFEQKVDHFGFADMRTFKQRYLVADKHWQRNGGSILFYTGNEGDIVWFCNNTGFMWDVAEELKAMLVFAEHRYYGESLPFGQDSFKDSQHLNFLTSEQALADFAELIRHLEKTIPGAQGQPVIAIGGSYGGMLAAWFRMKYPHIVVGALAASAPIWQLDGMVPCGEFMKIVTNDFRKSGPYCSESIRKSWNVIDKLSGSGSGLQSLTNILHLCSPLTSEKIPTLKGWIAETWVNLAMVNYPYACNFLQPLPAWPIKEVCQYLKNPNVSDTVLLQNIFQALSVYYNYSGQAACLNISQTTTSSLGSMGWSFQACTEMVMPFCTNGIDDMFEPFLWDLEKYSNDCFNQWGVKPRPHWMTTMYGGKNISSHSNIIFSNGELDPWSGGGVTRDITDTLVAINIHDGAHHLDLRAHNAFDPSSVLLSRLLEVKHMKKWILDFYSNIQ.

The first 17 residues, 1–17 (MGCRALLLLSFLLLGAA), serve as a signal peptide directing secretion. A propeptide spanning residues 18 to 43 (TTIPPRLKTLGSPHLSASPTPDPAVA) is cleaved from the precursor. Asn-99 carries an N-linked (GlcNAc...) asparagine glycan. Ser-177 serves as the catalytic Charge relay system. Positions 192–332 (HIVVGALAAS…QNIFQALSVY (141 aa)) are SKS domain. Cystine bridges form between Cys-213/Cys-370, Cys-231/Cys-308, Cys-262/Cys-341, and Cys-362/Cys-392. Residues Asn-315, Asn-334, and Asn-343 are each glycosylated (N-linked (GlcNAc...) asparagine). Residue Asn-413 is glycosylated (N-linked (GlcNAc...) asparagine). Residues Asp-428 and His-453 each act as charge relay system in the active site.

This sequence belongs to the peptidase S28 family. In terms of assembly, homodimer.

The protein resides in the lysosome. It carries out the reaction Cleavage of a -Pro-|-Xaa bond to release a C-terminal amino acid.. Functionally, cleaves C-terminal amino acids linked to proline in peptides such as angiotensin II, III and des-Arg9-bradykinin. This cleavage occurs at acidic pH, but enzymatic activity is retained with some substrates at neutral pH. This Mus musculus (Mouse) protein is Lysosomal Pro-X carboxypeptidase (Prcp).